A 588-amino-acid chain; its full sequence is Urease subunit alpha (588 aa).

Positions 149–588 (GGIDTHIHFI…LPMAQRYFLF (440 aa)) constitute a Urease domain. Residues histidine 154, histidine 156, and lysine 237 each coordinate Ni(2+). Lysine 237 carries the N6-carboxylysine modification. Residue histidine 239 participates in substrate binding. Ni(2+)-binding residues include histidine 266 and histidine 292. Histidine 340 functions as the Proton donor in the catalytic mechanism. Aspartate 380 contacts Ni(2+).

This sequence belongs to the metallo-dependent hydrolases superfamily. Urease alpha subunit family. Heterotrimer of UreA (gamma), UreB (beta) and UreC (alpha) subunits. Three heterotrimers associate to form the active enzyme. Requires Ni cation as cofactor. In terms of processing, carboxylation allows a single lysine to coordinate two nickel ions.

It is found in the cytoplasm. The enzyme catalyses urea + 2 H2O + H(+) = hydrogencarbonate + 2 NH4(+). Its pathway is nitrogen metabolism; urea degradation; CO(2) and NH(3) from urea (urease route): step 1/1. In Opitutus terrae (strain DSM 11246 / JCM 15787 / PB90-1), this protein is Urease subunit alpha.